Consider the following 353-residue polypeptide: UDP-N-acetylglucosamine--N-acetylmuramyl-(pentapeptide) pyrophosphoryl-undecaprenol N-acetylglucosamine transferase (353 aa).

UDP-N-acetyl-alpha-D-glucosamine-binding positions include 10-12 (TGG), Asn-124, Ser-183, and Gln-283.

The protein belongs to the glycosyltransferase 28 family. MurG subfamily.

It is found in the cell inner membrane. It catalyses the reaction di-trans,octa-cis-undecaprenyl diphospho-N-acetyl-alpha-D-muramoyl-L-alanyl-D-glutamyl-meso-2,6-diaminopimeloyl-D-alanyl-D-alanine + UDP-N-acetyl-alpha-D-glucosamine = di-trans,octa-cis-undecaprenyl diphospho-[N-acetyl-alpha-D-glucosaminyl-(1-&gt;4)]-N-acetyl-alpha-D-muramoyl-L-alanyl-D-glutamyl-meso-2,6-diaminopimeloyl-D-alanyl-D-alanine + UDP + H(+). It functions in the pathway cell wall biogenesis; peptidoglycan biosynthesis. In terms of biological role, cell wall formation. Catalyzes the transfer of a GlcNAc subunit on undecaprenyl-pyrophosphoryl-MurNAc-pentapeptide (lipid intermediate I) to form undecaprenyl-pyrophosphoryl-MurNAc-(pentapeptide)GlcNAc (lipid intermediate II). This Helicobacter pylori (strain P12) protein is UDP-N-acetylglucosamine--N-acetylmuramyl-(pentapeptide) pyrophosphoryl-undecaprenol N-acetylglucosamine transferase.